We begin with the raw amino-acid sequence, 384 residues long: uncharacterized protein (384 aa).

Disordered stretches follow at residues 133–257 (RQNS…TNQD) and 297–368 (ERTP…STAT). A compositionally biased stretch (low complexity) spans 143 to 157 (PSTSSEPEPQPSTSS). The segment covering 302 to 315 (DQTDITDDSADWSE) has biased composition (acidic residues). Basic and acidic residues predominate over residues 316–342 (GETRRPSHSEVGERRLSRENNSEDPNR). Residues 343 to 363 (SRSRSRSRERRRRRPRVRPGR) show a composition bias toward basic residues.

This is an uncharacterized protein from Gallid herpesvirus 2 (strain Chicken/Md5/ATCC VR-987) (GaHV-2).